A 274-amino-acid chain; its full sequence is 2-dehydro-3-deoxyphosphooctonate aldolase (274 aa).

The protein belongs to the KdsA family.

Its subcellular location is the cytoplasm. The catalysed reaction is D-arabinose 5-phosphate + phosphoenolpyruvate + H2O = 3-deoxy-alpha-D-manno-2-octulosonate-8-phosphate + phosphate. Its pathway is carbohydrate biosynthesis; 3-deoxy-D-manno-octulosonate biosynthesis; 3-deoxy-D-manno-octulosonate from D-ribulose 5-phosphate: step 2/3. It functions in the pathway bacterial outer membrane biogenesis; lipopolysaccharide biosynthesis. In Rickettsia rickettsii (strain Iowa), this protein is 2-dehydro-3-deoxyphosphooctonate aldolase.